Reading from the N-terminus, the 453-residue chain is Chromosomal replication initiator protein DnaA (453 aa).

The segment at 1-71 is domain I, interacts with DnaA modulators; it reads MSEKEIWEKV…QAILFDVVGY (71 aa). A domain II region spans residues 71 to 114; that stretch reads YEVKPHFITTEELANYSNNETATPKETTKPSTETTEDNHVLGRE. Residues 115–331 form a domain III, AAA+ region region; the sequence is QFNAHNTFDT…GALTRLLAYS (217 aa). ATP is bound by residues G159, G161, K162, and T163. Positions 332 to 453 are domain IV, binds dsDNA; that stretch reads QLLGKPITTE…ENLEKEIRNV (122 aa).

This sequence belongs to the DnaA family. Oligomerizes as a right-handed, spiral filament on DNA at oriC.

Its subcellular location is the cytoplasm. Its function is as follows. Plays an essential role in the initiation and regulation of chromosomal replication. ATP-DnaA binds to the origin of replication (oriC) to initiate formation of the DNA replication initiation complex once per cell cycle. Binds the DnaA box (a 9 base pair repeat at the origin) and separates the double-stranded (ds)DNA. Forms a right-handed helical filament on oriC DNA; dsDNA binds to the exterior of the filament while single-stranded (ss)DNA is stabiized in the filament's interior. The ATP-DnaA-oriC complex binds and stabilizes one strand of the AT-rich DNA unwinding element (DUE), permitting loading of DNA polymerase. After initiation quickly degrades to an ADP-DnaA complex that is not apt for DNA replication. Binds acidic phospholipids. In Staphylococcus aureus (strain bovine RF122 / ET3-1), this protein is Chromosomal replication initiator protein DnaA.